A 136-amino-acid polypeptide reads, in one-letter code: Large ribosomal subunit protein uL16 (136 aa).

The protein belongs to the universal ribosomal protein uL16 family. Part of the 50S ribosomal subunit.

In terms of biological role, binds 23S rRNA and is also seen to make contacts with the A and possibly P site tRNAs. The sequence is that of Large ribosomal subunit protein uL16 from Vesicomyosocius okutanii subsp. Calyptogena okutanii (strain HA).